The chain runs to 176 residues: ATP-dependent protease subunit HslV (176 aa).

The active site involves T4. Na(+)-binding residues include A159, C162, and T165.

It belongs to the peptidase T1B family. HslV subfamily. In terms of assembly, a double ring-shaped homohexamer of HslV is capped on each side by a ring-shaped HslU homohexamer. The assembly of the HslU/HslV complex is dependent on binding of ATP.

The protein localises to the cytoplasm. The catalysed reaction is ATP-dependent cleavage of peptide bonds with broad specificity.. Its activity is regulated as follows. Allosterically activated by HslU binding. Functionally, protease subunit of a proteasome-like degradation complex believed to be a general protein degrading machinery. The sequence is that of ATP-dependent protease subunit HslV from Wolbachia sp. subsp. Brugia malayi (strain TRS).